We begin with the raw amino-acid sequence, 660 residues long: tRNA 5-methylaminomethyl-2-thiouridine biosynthesis bifunctional protein MnmC (660 aa).

Positions 1–235 (MTITRHARID…KWEVLRGAFI (235 aa)) are tRNA (mnm(5)s(2)U34)-methyltransferase. Residues 266–660 (IGAGLAGCAT…LRGLIRGGGK (395 aa)) are FAD-dependent cmnm(5)s(2)U34 oxidoreductase.

The protein in the N-terminal section; belongs to the methyltransferase superfamily. tRNA (mnm(5)s(2)U34)-methyltransferase family. In the C-terminal section; belongs to the DAO family. FAD is required as a cofactor.

Its subcellular location is the cytoplasm. The enzyme catalyses 5-aminomethyl-2-thiouridine(34) in tRNA + S-adenosyl-L-methionine = 5-methylaminomethyl-2-thiouridine(34) in tRNA + S-adenosyl-L-homocysteine + H(+). Its function is as follows. Catalyzes the last two steps in the biosynthesis of 5-methylaminomethyl-2-thiouridine (mnm(5)s(2)U) at the wobble position (U34) in tRNA. Catalyzes the FAD-dependent demodification of cmnm(5)s(2)U34 to nm(5)s(2)U34, followed by the transfer of a methyl group from S-adenosyl-L-methionine to nm(5)s(2)U34, to form mnm(5)s(2)U34. The sequence is that of tRNA 5-methylaminomethyl-2-thiouridine biosynthesis bifunctional protein MnmC from Pseudomonas syringae pv. tomato (strain ATCC BAA-871 / DC3000).